The primary structure comprises 27 residues: CAGIGSFCGLPGLVDCCSDRCFIVCLP.

3 cysteine pairs are disulfide-bonded: C1–C17, C8–C21, and C16–C25.

This sequence belongs to the conotoxin O1 superfamily. Expressed by the venom duct, in the proximal part (indicative of a defensive role).

It is found in the secreted. Functionally, this toxin activates voltage-gated sodium channels (Nav1.3/SCN3A (EC(50)=3.98 nM), Nav1.4/SCN4A (EC(50)=4.99 nM), Nav1.6/SCN8A (EC(50)=1.27 nM) and Nav1.7/SCN9A (EC(50)=2.42 nM)). It shifts the voltage-dependence of activation to more hyperpolarized potentials but has only little effect on channel inactivation. In vivo, it induces nocifensive or pain-like behaviors in mice when injected intraplantarly. This is coherent with the specific defensive role deduced from its proximal position in the venom gland. This Conus suturatus (Sutured cone) protein is Delta-conotoxin SuVIA.